Reading from the N-terminus, the 552-residue chain is Terpene synthase 5 (552 aa).

Residues Asp-307, Asp-311, and Glu-457 each contribute to the Mg(2+) site. The short motif at Asp-307–Asp-311 is the DDXXD motif element.

The protein belongs to the terpene synthase family. Mg(2+) serves as cofactor.

Its function is as follows. Catalyzes the cyclization of farnesyl diphosphate to multiple sesquiterpenes, such as olefins and sesquiterpene alcohols. In Ricinus communis (Castor bean), this protein is Terpene synthase 5 (TPS5).